The primary structure comprises 969 residues: Glycine dehydrogenase (decarboxylating) (969 aa).

Position 716 is an N6-(pyridoxal phosphate)lysine (Lys-716).

It belongs to the GcvP family. The glycine cleavage system is composed of four proteins: P, T, L and H. The cofactor is pyridoxal 5'-phosphate.

The enzyme catalyses N(6)-[(R)-lipoyl]-L-lysyl-[glycine-cleavage complex H protein] + glycine + H(+) = N(6)-[(R)-S(8)-aminomethyldihydrolipoyl]-L-lysyl-[glycine-cleavage complex H protein] + CO2. In terms of biological role, the glycine cleavage system catalyzes the degradation of glycine. The P protein binds the alpha-amino group of glycine through its pyridoxal phosphate cofactor; CO(2) is released and the remaining methylamine moiety is then transferred to the lipoamide cofactor of the H protein. This is Glycine dehydrogenase (decarboxylating) from Shewanella woodyi (strain ATCC 51908 / MS32).